The sequence spans 208 residues: MVNKRMQTLLTQLRQQGIRDERLLQAIEAVPRERFVDEALEHKAYENTALPIGSGQTISQPYMVARMTELLNLTPTSRVLEIGTGSGYQTAILAHLVQHVCSVERIKGLQWQAKRRLKQLDLHNVSTRHGDGWQGWASRGPFDAIIVTAAPPEIPPALMEQLDDGGILVLPVGEQAQTLKYIRRQGSEFVIDTVEAVRFVPLVKGELA.

The active site involves serine 59.

The protein belongs to the methyltransferase superfamily. L-isoaspartyl/D-aspartyl protein methyltransferase family.

It is found in the cytoplasm. It catalyses the reaction [protein]-L-isoaspartate + S-adenosyl-L-methionine = [protein]-L-isoaspartate alpha-methyl ester + S-adenosyl-L-homocysteine. Catalyzes the methyl esterification of L-isoaspartyl residues in peptides and proteins that result from spontaneous decomposition of normal L-aspartyl and L-asparaginyl residues. It plays a role in the repair and/or degradation of damaged proteins. The sequence is that of Protein-L-isoaspartate O-methyltransferase from Serratia proteamaculans (strain 568).